Reading from the N-terminus, the 80-residue chain is Large ribosomal subunit protein uL24 (80 aa).

Belongs to the universal ribosomal protein uL24 family. As to quaternary structure, part of the 50S ribosomal subunit.

One of two assembly initiator proteins, it binds directly to the 5'-end of the 23S rRNA, where it nucleates assembly of the 50S subunit. In terms of biological role, one of the proteins that surrounds the polypeptide exit tunnel on the outside of the subunit. The chain is Large ribosomal subunit protein uL24 from Chlorobium phaeovibrioides (strain DSM 265 / 1930) (Prosthecochloris vibrioformis (strain DSM 265)).